Consider the following 132-residue polypeptide: MSDIDFGYTKDHARKGANAKLPEIQCWENQYKRDYDIRIELPEFTSVCPKTGLPDFGVITIDYIPDRLCLELKSLKYYLLEYRDMGIFMENIANKILDDVVKACKPKKAVVTGDFTPRGGLRSVIVAKYEKK.

Catalysis depends on Cys-48, which acts as the Thioimide intermediate. The Proton donor role is filled by Asp-55. Substrate contacts are provided by residues 70–72 (LEL) and 89–90 (ME).

This sequence belongs to the GTP cyclohydrolase I family. QueF type 1 subfamily.

The protein localises to the cytoplasm. The enzyme catalyses 7-aminomethyl-7-carbaguanine + 2 NADP(+) = 7-cyano-7-deazaguanine + 2 NADPH + 3 H(+). Its pathway is tRNA modification; tRNA-queuosine biosynthesis. Its function is as follows. Catalyzes the NADPH-dependent reduction of 7-cyano-7-deazaguanine (preQ0) to 7-aminomethyl-7-deazaguanine (preQ1). In Elusimicrobium minutum (strain Pei191), this protein is NADPH-dependent 7-cyano-7-deazaguanine reductase.